Here is a 418-residue protein sequence, read N- to C-terminus: 3-isopropylmalate dehydratase large subunit (418 aa).

3 residues coordinate [4Fe-4S] cluster: Cys-298, Cys-358, and Cys-361.

It belongs to the aconitase/IPM isomerase family. LeuC type 2 subfamily. Heterodimer of LeuC and LeuD. Requires [4Fe-4S] cluster as cofactor.

It catalyses the reaction (2R,3S)-3-isopropylmalate = (2S)-2-isopropylmalate. The protein operates within amino-acid biosynthesis; L-leucine biosynthesis; L-leucine from 3-methyl-2-oxobutanoate: step 2/4. Its function is as follows. Catalyzes the isomerization between 2-isopropylmalate and 3-isopropylmalate, via the formation of 2-isopropylmaleate. This Thermoanaerobacter sp. (strain X514) protein is 3-isopropylmalate dehydratase large subunit.